Reading from the N-terminus, the 504-residue chain is Malonyl-CoA decarboxylase, mitochondrial (504 aa).

Residues 1 to 50 constitute a mitochondrion transit peptide; the sequence is MRGLRRGLSRLGPRLGPWAVPRSLRRVLRAAGPWRGQSSAGSVSERGGAS. An alpha-helical domain region spans residues 51-201; the sequence is MEEVLSRSVP…VLKNMLSEWF (151 aa). A catalytic domain region spans residues 202 to 504; it reads STGFLNLERV…VSQFQQNSKL (303 aa). The active-site Proton acceptor is the S340. H434 serves as the catalytic Proton donor. Positions 502-504 match the Microbody targeting signal motif; that stretch reads SKL.

Its subcellular location is the mitochondrion. It localises to the cytoplasm. The protein resides in the peroxisome. The catalysed reaction is malonyl-CoA + H(+) = acetyl-CoA + CO2. It participates in metabolic intermediate biosynthesis; acetyl-CoA biosynthesis; acetyl-CoA from malonyl-CoA: step 1/1. Functionally, catalyzes the conversion of malonyl-CoA to acetyl-CoA. In the fatty acid biosynthesis MCD selectively removes malonyl-CoA and thus assures that methyl-malonyl-CoA is the only chain elongating substrate for fatty acid synthase and that fatty acids with multiple methyl side chains are produced. The sequence is that of Malonyl-CoA decarboxylase, mitochondrial (MLYCD) from Anser anser anser (Western greylag goose).